The chain runs to 283 residues: Diphthine methyl ester synthase (283 aa).

Residues L9, D84, G87, 112–113, L163, M221, and H246 each bind S-adenosyl-L-methionine; that span reads SI.

This sequence belongs to the diphthine synthase family.

It localises to the cytoplasm. The enzyme catalyses 2-[(3S)-amino-3-carboxypropyl]-L-histidyl-[translation elongation factor 2] + 4 S-adenosyl-L-methionine = diphthine methyl ester-[translation elongation factor 2] + 4 S-adenosyl-L-homocysteine + 3 H(+). It participates in protein modification; peptidyl-diphthamide biosynthesis. In terms of biological role, S-adenosyl-L-methionine-dependent methyltransferase that catalyzes four methylations of the modified target histidine residue in translation elongation factor 2 (EF-2), to form an intermediate called diphthine methyl ester. The four successive methylation reactions represent the second step of diphthamide biosynthesis. The polypeptide is Diphthine methyl ester synthase (dph5) (Schizosaccharomyces pombe (strain 972 / ATCC 24843) (Fission yeast)).